The primary structure comprises 365 residues: Succinyl-diaminopimelate desuccinylase (365 aa).

Residue His-64 coordinates Zn(2+). Asp-66 is an active-site residue. Asp-95 serves as a coordination point for Zn(2+). The active-site Proton acceptor is Glu-125. Zn(2+) is bound by residues Glu-126, Glu-154, and His-339.

Belongs to the peptidase M20A family. DapE subfamily. Homodimer. Zn(2+) serves as cofactor. Requires Co(2+) as cofactor.

It carries out the reaction N-succinyl-(2S,6S)-2,6-diaminopimelate + H2O = (2S,6S)-2,6-diaminopimelate + succinate. It functions in the pathway amino-acid biosynthesis; L-lysine biosynthesis via DAP pathway; LL-2,6-diaminopimelate from (S)-tetrahydrodipicolinate (succinylase route): step 3/3. In terms of biological role, catalyzes the hydrolysis of N-succinyl-L,L-diaminopimelic acid (SDAP), forming succinate and LL-2,6-diaminopimelate (DAP), an intermediate involved in the bacterial biosynthesis of lysine and meso-diaminopimelic acid, an essential component of bacterial cell walls. This chain is Succinyl-diaminopimelate desuccinylase, found in Campylobacter fetus subsp. fetus (strain 82-40).